A 466-amino-acid chain; its full sequence is Cysteine--tRNA ligase (466 aa).

Cys27 lines the Zn(2+) pocket. The short motif at 29–39 (PTVYDLAHIGN) is the 'HIGH' region element. 3 residues coordinate Zn(2+): Cys211, His236, and Glu240. The 'KMSKS' region motif lies at 270–274 (KMSKS). An ATP-binding site is contributed by Lys273.

It belongs to the class-I aminoacyl-tRNA synthetase family. As to quaternary structure, monomer. Zn(2+) serves as cofactor.

The protein localises to the cytoplasm. It catalyses the reaction tRNA(Cys) + L-cysteine + ATP = L-cysteinyl-tRNA(Cys) + AMP + diphosphate. The polypeptide is Cysteine--tRNA ligase (Anaplasma marginale (strain St. Maries)).